The sequence spans 360 residues: UPF0283 membrane protein Oant_2119 (360 aa).

The segment at 1-30 (MTEKTPRKPASFTVSQASNRPEAADEAPRR) is disordered. 2 consecutive transmembrane segments (helical) span residues 77 to 97 (ILFGALGILVSFAIGIWTEDL) and 108 to 128 (LGWTALGVAIIALAAFIAIVV).

The protein belongs to the UPF0283 family.

Its subcellular location is the cell inner membrane. In Brucella anthropi (strain ATCC 49188 / DSM 6882 / CCUG 24695 / JCM 21032 / LMG 3331 / NBRC 15819 / NCTC 12168 / Alc 37) (Ochrobactrum anthropi), this protein is UPF0283 membrane protein Oant_2119.